The sequence spans 446 residues: MVTFEDVAVHFTKTEWTGLSPAQRALYRSVMLENFGNLTALGYPVPKPALISLLEGGDMAWGLEAQDDPPAETTKNVRKDVETNIDSESTLIQGISEERDGMMSHGQLKSVPQRTDFPETCNVEKHQDIPTVKNIRGKVPRIPCARKPFICEECGKSFSYFSYYARHQRIHTGEKPFECSECGKAFNGNSSLIRHQRIHTGEKPYQCEECGRAFNDNANLIRHQRIHSGDRPYYCTECGNSFTSSSEFVIHQRIHTGEKPYECNECGKAFVGNSPLLRHQKIHTGEKPYECNECGKSFGRTSHLSQHQRIHTGEKPYSCKVCGQAFNFHTKLTRHQRIHSEEKPFDCVDCGKAFSAQEQLKRHLRIHTQESSYVCDECGKAFTSKRNLHQHQRIHTGEKPYEYSKYEKAFGTSSQLGHLEHVHSGEKPVLDICRFGLPEFFTPFYW.

Residues 2 to 73 form the KRAB domain; that stretch reads VTFEDVAVHF…EAQDDPPAET (72 aa). 9 C2H2-type zinc fingers span residues 149–171, 177–199, 205–227, 233–255, 261–283, 289–311, 317–339, 345–367, and 373–395; these read FICEECGKSFSYFSYYARHQRIH, FECSECGKAFNGNSSLIRHQRIH, YQCEECGRAFNDNANLIRHQRIH, YYCTECGNSFTSSSEFVIHQRIH, YECNECGKAFVGNSPLLRHQKIH, YECNECGKSFGRTSHLSQHQRIH, YSCKVCGQAFNFHTKLTRHQRIH, FDCVDCGKAFSAQEQLKRHLRIH, and YVCDECGKAFTSKRNLHQHQRIH. The C2H2-type 10; degenerate zinc-finger motif lies at 401–423; the sequence is YEYSKYEKAFGTSSQLGHLEHVH.

This sequence belongs to the krueppel C2H2-type zinc-finger protein family.

It is found in the nucleus. Functionally, may be involved in transcriptional regulation. The chain is Zinc finger protein 19 (ZNF19) from Pongo abelii (Sumatran orangutan).